Consider the following 185-residue polypeptide: MIEVGDLEKGMYIKYEGDIYRVVDVNKHFRARGSGLIRTKLKSLSTGLIRDANFASGEKVEEAELSFRKAEYLYNDGENYYFMDLQTYEQYAIPESEVDEAKYYLIENTQVDLVMHDEKPIGINLPTTVVLEVIETEPNFKGDTVSGGGKPAVLQTGLKISVPFFINVGDKIKVDTRTGEYIERA.

The protein belongs to the elongation factor P family.

Its subcellular location is the cytoplasm. The protein operates within protein biosynthesis; polypeptide chain elongation. Involved in peptide bond synthesis. Stimulates efficient translation and peptide-bond synthesis on native or reconstituted 70S ribosomes in vitro. Probably functions indirectly by altering the affinity of the ribosome for aminoacyl-tRNA, thus increasing their reactivity as acceptors for peptidyl transferase. This Fervidobacterium nodosum (strain ATCC 35602 / DSM 5306 / Rt17-B1) protein is Elongation factor P.